Here is a 979-residue protein sequence, read N- to C-terminus: UPF0182 protein BCG_0095 (979 aa).

The next 7 membrane-spanning stretches (helical) occupy residues 19–39 (LVTAGMGMLALLLFGPRLVDI), 63–83 (LAIVAAVALVVAGIVLAALLL), 114–134 (LFGWGIAVTLGVVCGLIASFD), 174–194 (WLFVAVVLAFLASLLTHYLFG), 211–231 (VQLAVFAGAVVLLKAVAYWLD), 260–280 (KLVLVAIAVLCAVSFFTAIFL), and 288–308 (MAAALLVLSAILVGGLWPLLM). Residues 898-948 (GTGRVATAPGGDAASAPPPGAGGPAPPQAVPPPRTTQPPAAPPRGPDVPPA) form a disordered region. Low complexity predominate over residues 902-912 (VATAPGGDAAS). Residues 913–946 (APPPGAGGPAPPQAVPPPRTTQPPAAPPRGPDVP) show a composition bias toward pro residues.

Belongs to the UPF0182 family.

It localises to the cell membrane. In Mycobacterium bovis (strain BCG / Pasteur 1173P2), this protein is UPF0182 protein BCG_0095.